Here is an 84-residue protein sequence, read N- to C-terminus: Small ribosomal subunit protein uS17 (84 aa).

The protein belongs to the universal ribosomal protein uS17 family. As to quaternary structure, part of the 30S ribosomal subunit.

In terms of biological role, one of the primary rRNA binding proteins, it binds specifically to the 5'-end of 16S ribosomal RNA. The polypeptide is Small ribosomal subunit protein uS17 (Clostridium beijerinckii (strain ATCC 51743 / NCIMB 8052) (Clostridium acetobutylicum)).